The chain runs to 389 residues: MRVLVRRCWGPPLAHGARRGRPSPQWRALARLGWEDCRDSRVREKPPWRVLFFGTDQFAREALRALHAARENKEEELIDKLEVVTMPSPSPKGLPVKQYAVQSQLPVYEWPDVGSGEYDVGVVASFGRLLNEALILKFPYGILNVHPSCLPRWRGPAPVIHTVLHGDTVTGVTIMQIRPKRFDVGPILKQETVPVPPKSTAKELEAVLSRLGANMLISVLKNLPESLSNGRQQPMEGATYAPKISAGTSCIKWEEQTSEQIFRLYRAIGNIIPLQTLWMANTIKLLDLVEVNSSVLADPKLTGQALIPGSVIYHKQSQILLVYCKDGWIGVRSVMLKKSLTATDFYNGYLHPWYQKNSQAQPSQCRFQTLRLPTKKKQKKTVAMQQCIE.

The protein belongs to the Fmt family.

The protein localises to the mitochondrion. It carries out the reaction L-methionyl-tRNA(fMet) + (6R)-10-formyltetrahydrofolate = N-formyl-L-methionyl-tRNA(fMet) + (6S)-5,6,7,8-tetrahydrofolate + H(+). Its function is as follows. Methionyl-tRNA formyltransferase that formylates methionyl-tRNA in mitochondria and is crucial for translation initiation. This is Methionyl-tRNA formyltransferase, mitochondrial (MTFMT) from Homo sapiens (Human).